The sequence spans 809 residues: Penicillin-binding protein 1A (809 aa).

Residues 1–34 (MSDNTKTNSRNKSVKRTKKVKKKKKFGFFKKLFT) lie on the Cytoplasmic side of the membrane. Residues 35 to 55 (ILFCLFILLSVAASGVIFAIV) traverse the membrane as a helical; Signal-anchor for type II membrane protein segment. Residues 56–809 (KTSPNLDING…PNNNTTNTNK (754 aa)) lie on the Extracellular side of the membrane. Residues 74–251 (SQLYDDNNNP…PSAYYPFSQN (178 aa)) are transglycosylase. Glu113 acts as the Proton donor; for transglycosylase activity in catalysis. Residues 381-664 (AAATLFDYHT…VAEIWGEIMK (284 aa)) are transpeptidase. Catalysis depends on Ser422, which acts as the Acyl-ester intermediate; for transpeptidase activity. A disordered region spans residues 694 to 809 (SPSNLSGDDS…PNNNTTNTNK (116 aa)).

In the N-terminal section; belongs to the glycosyltransferase 51 family. This sequence in the C-terminal section; belongs to the transpeptidase family.

The protein resides in the cell membrane. The enzyme catalyses [GlcNAc-(1-&gt;4)-Mur2Ac(oyl-L-Ala-gamma-D-Glu-L-Lys-D-Ala-D-Ala)](n)-di-trans,octa-cis-undecaprenyl diphosphate + beta-D-GlcNAc-(1-&gt;4)-Mur2Ac(oyl-L-Ala-gamma-D-Glu-L-Lys-D-Ala-D-Ala)-di-trans,octa-cis-undecaprenyl diphosphate = [GlcNAc-(1-&gt;4)-Mur2Ac(oyl-L-Ala-gamma-D-Glu-L-Lys-D-Ala-D-Ala)](n+1)-di-trans,octa-cis-undecaprenyl diphosphate + di-trans,octa-cis-undecaprenyl diphosphate + H(+). It catalyses the reaction Preferential cleavage: (Ac)2-L-Lys-D-Ala-|-D-Ala. Also transpeptidation of peptidyl-alanyl moieties that are N-acyl substituents of D-alanine.. It functions in the pathway cell wall biogenesis; peptidoglycan biosynthesis. Functionally, cell wall formation. Synthesis of cross-linked peptidoglycan from the lipid intermediates. The enzyme has a penicillin-insensitive transglycosylase N-terminal domain (formation of linear glycan strands) and a penicillin-sensitive transpeptidase C-terminal domain (cross-linking of the peptide subunits). The protein is Penicillin-binding protein 1A (pbpA) of Clostridium acetobutylicum (strain ATCC 824 / DSM 792 / JCM 1419 / IAM 19013 / LMG 5710 / NBRC 13948 / NRRL B-527 / VKM B-1787 / 2291 / W).